Consider the following 639-residue polypeptide: Homeobox protein 9 (639 aa).

Disordered stretches follow at residues 1 to 45, 66 to 144, 157 to 179, 262 to 313, 331 to 422, and 436 to 547; these read MLNS…DKQN, SPNH…DDNS, NQNQ…QNQN, PRTL…SSGT, SESS…QTSN, and TNKN…NNEN. Residues 72–109 are a coiled coil; that stretch reads ANNNNNNNNNNNNNNNNNNNNNNNNNNNNNNNNNNNIQ. 2 stretches are compositionally biased toward low complexity: residues 73–119 and 126–142; these read NNNN…SNNN and GSLN…GNDD. 2 coiled-coil regions span residues 152-184 and 230-296; these read SNQN…KDSW and EIEI…NINE. Residues 266 to 300 are compositionally biased toward low complexity; the sequence is NNSSDSISENINNNNNNNNNNNNNNNNNINESNIN. Residues 345–354 are compositionally biased toward basic and acidic residues; that stretch reads QPRKVPRDLN. The segment covering 358–399 has biased composition (low complexity); it reads NNNINYANNNNNNNNNNNNNNHNNNINNNNNNNNNNNNNSNN. The stretch at 365 to 396 forms a coiled coil; the sequence is NNNNNNNNNNNNNNHNNNINNNNNNNNNNNNN. Over residues 405–422 the composition is skewed to polar residues; that stretch reads GSITNSVNIKPSKDQTSN. The segment covering 436–526 has biased composition (low complexity); that stretch reads TNKNNNNNNN…NNNLTSSSNN (91 aa). Residues 532–547 show a composition bias toward polar residues; the sequence is GNTSPNQSSANGNNEN. Positions 559 to 621 form a DNA-binding region, homeobox; sequence KRKKRGKLPG…NARRRILPRQ (63 aa).

It localises to the nucleus. Its function is as follows. Putative transcription factor. The chain is Homeobox protein 9 (hbx9) from Dictyostelium discoideum (Social amoeba).